A 320-amino-acid polypeptide reads, in one-letter code: MLLFTAVISVPMLLLAVSVLMSVIYDSMFKPMNHGMPFHRSFAYPAMIVVFLISLLLLAFLFSKSIHSLLHKINLLNQTIRHLASDQRVPDKIEVKRADEIGELIKSVNLLIERTTYRELELRQQEEIKKELLQKLRHDINTPLTALRLQLFYLEDQCHGQAVFESLYQQIEYISELTNEFNLYSAETLESSYIVNEEVRLNELLETAVKKWDYLYSMSGIELHYKPADQDVIWMSNTLWMERLFDNIFQNTLRHSKAKKMEVTIEHGDVFIRDDGIGFDRNESSEGLGLKIIEDTCRLLAITYELHTNDNGTGFLFSKE.

The chain crosses the membrane as a helical span at residues 1–21 (MLLFTAVISVPMLLLAVSVLM). Residues 22–41 (SVIYDSMFKPMNHGMPFHRS) are Extracellular-facing. The helical transmembrane segment at 42-62 (FAYPAMIVVFLISLLLLAFLF) threads the bilayer. At 63 to 320 (SKSIHSLLHK…NGTGFLFSKE (258 aa)) the chain is on the cytoplasmic side. In terms of domain architecture, HAMP spans 67–120 (HSLLHKINLLNQTIRHLASDQRVPDKIEVKRADEIGELIKSVNLLIERTTYREL). In terms of domain architecture, Histidine kinase spans 135–320 (KLRHDINTPL…NGTGFLFSKE (186 aa)). His138 is modified (phosphohistidine; by autocatalysis).

The protein resides in the cell membrane. It catalyses the reaction ATP + protein L-histidine = ADP + protein N-phospho-L-histidine.. Functionally, member of the two-component regulatory system YbdK/YbdJ. Probably activates YbdJ by phosphorylation. This is Sensor histidine kinase YbdK (ybdK) from Bacillus subtilis (strain 168).